Consider the following 355-residue polypeptide: Peptide chain release factor 1 (355 aa).

Position 231 is an N5-methylglutamine (glutamine 231). The segment covering 280-291 has biased composition (basic and acidic residues); the sequence is SERLAKESEARK. Residues 280–303 are disordered; sequence SERLAKESEARKSQVGSGDRSERI.

It belongs to the prokaryotic/mitochondrial release factor family. Post-translationally, methylated by PrmC. Methylation increases the termination efficiency of RF1.

It is found in the cytoplasm. Its function is as follows. Peptide chain release factor 1 directs the termination of translation in response to the peptide chain termination codons UAG and UAA. This is Peptide chain release factor 1 from Campylobacter jejuni subsp. jejuni serotype O:2 (strain ATCC 700819 / NCTC 11168).